The chain runs to 308 residues: Dihydroorotate dehydrogenase A (fumarate) (308 aa).

FMN contacts are provided by residues serine 24 and 48–49 (KS). Substrate is bound by residues lysine 48, 72-76 (NANGL), and asparagine 132. Asparagine 132 is an FMN binding site. The Nucleophile role is filled by cysteine 135. FMN is bound by residues lysine 171 and isoleucine 197. 198 to 199 (NT) contributes to the substrate binding site. Residues glycine 223 and 249 to 250 (GG) each bind FMN.

Belongs to the dihydroorotate dehydrogenase family. Type 1 subfamily. As to quaternary structure, homodimer. FMN is required as a cofactor.

It is found in the cytoplasm. The enzyme catalyses (S)-dihydroorotate + fumarate = orotate + succinate. It participates in pyrimidine metabolism; UMP biosynthesis via de novo pathway. In terms of biological role, catalyzes the conversion of dihydroorotate to orotate with fumarate as the electron acceptor. This chain is Dihydroorotate dehydrogenase A (fumarate) (pyrD), found in Limosilactobacillus reuteri (strain DSM 20016) (Lactobacillus reuteri).